The sequence spans 189 residues: HTH-type transcriptional repressor LfrR (189 aa).

Positions 12–70 constitute an HTH tetR-type domain; the sequence is ERTRRAILDAAMLVLADHPTAALGDIAAAAGVGRSTVHRYYPERTDLLRALARHVHDLS. Positions 33–52 form a DNA-binding region, H-T-H motif; it reads ALGDIAAAAGVGRSTVHRYY. Residues 70–71 are proflavine binding; it reads SN.

As to quaternary structure, homodimer. Forms a structurally asymmetric homodimer exhibiting local unfolding and a blocked drug-binding site.

With respect to regulation, repressor activity is regulated by binding of different substrates of the LfrA multidrug efflux pump, such as acriflavine, proflavine, ethidium bromide and rhodamine 123. Binding of these ligands causes the dissociation of LfrR from the promoter, inducing lfrA expression. Represses the transcription of the lfrRA operon by binding directly to the promoter region of lfrR-lfrA. Binds specifically to a 143-bp region upstream of the lfrR gene. This Mycolicibacterium smegmatis (strain ATCC 700084 / mc(2)155) (Mycobacterium smegmatis) protein is HTH-type transcriptional repressor LfrR.